The chain runs to 514 residues: Membrane-bound lytic murein transglycosylase F (514 aa).

The first 30 residues, 1–30 (MKKLKINYLFIGILTLLLAAALWPSIPWFG), serve as a signal peptide directing secretion. The segment at 31–269 (KTENHIAAIQ…RIEEKYLGHG (239 aa)) is non-LT domain. Residues 270–514 (DDFDYVDTRS…LFTPQKKEEK (245 aa)) form an LT domain region. The active site involves E314.

This sequence in the N-terminal section; belongs to the bacterial solute-binding protein 3 family. It in the C-terminal section; belongs to the transglycosylase Slt family.

It is found in the cell outer membrane. The enzyme catalyses Exolytic cleavage of the (1-&gt;4)-beta-glycosidic linkage between N-acetylmuramic acid (MurNAc) and N-acetylglucosamine (GlcNAc) residues in peptidoglycan, from either the reducing or the non-reducing ends of the peptidoglycan chains, with concomitant formation of a 1,6-anhydrobond in the MurNAc residue.. Functionally, murein-degrading enzyme that degrades murein glycan strands and insoluble, high-molecular weight murein sacculi, with the concomitant formation of a 1,6-anhydromuramoyl product. Lytic transglycosylases (LTs) play an integral role in the metabolism of the peptidoglycan (PG) sacculus. Their lytic action creates space within the PG sacculus to allow for its expansion as well as for the insertion of various structures such as secretion systems and flagella. This is Membrane-bound lytic murein transglycosylase F from Salmonella choleraesuis (strain SC-B67).